The sequence spans 166 residues: NAD(P)H-quinone oxidoreductase subunit I, chloroplastic (166 aa).

2 4Fe-4S ferredoxin-type domains span residues Gly55–Lys84 and Leu95–Glu124. Positions 64, 67, 70, 74, 104, 107, 110, and 114 each coordinate [4Fe-4S] cluster.

The protein belongs to the complex I 23 kDa subunit family. In terms of assembly, NDH is composed of at least 16 different subunits, 5 of which are encoded in the nucleus. Requires [4Fe-4S] cluster as cofactor.

It is found in the plastid. The protein resides in the chloroplast thylakoid membrane. It catalyses the reaction a plastoquinone + NADH + (n+1) H(+)(in) = a plastoquinol + NAD(+) + n H(+)(out). The enzyme catalyses a plastoquinone + NADPH + (n+1) H(+)(in) = a plastoquinol + NADP(+) + n H(+)(out). Functionally, NDH shuttles electrons from NAD(P)H:plastoquinone, via FMN and iron-sulfur (Fe-S) centers, to quinones in the photosynthetic chain and possibly in a chloroplast respiratory chain. The immediate electron acceptor for the enzyme in this species is believed to be plastoquinone. Couples the redox reaction to proton translocation, and thus conserves the redox energy in a proton gradient. The sequence is that of NAD(P)H-quinone oxidoreductase subunit I, chloroplastic from Calea megacephala.